A 150-amino-acid polypeptide reads, in one-letter code: MQIILLEKIGGLGNLGDIVTVKNGYARNFLIPAGKAKRATEANMKEFEARRAELEAKQAEILADARARQEKLDGQTVTVAQKAGVDGRHNGSVTNADIAAAIVAAGIEAVKANVRLPNGPLKAVGEYEVEVALHTDAVAKITVAVIAAAE.

The protein belongs to the bacterial ribosomal protein bL9 family.

In terms of biological role, binds to the 23S rRNA. The sequence is that of Large ribosomal subunit protein bL9 from Neisseria gonorrhoeae.